The primary structure comprises 308 residues: Transaldolase (308 aa).

Lys125 functions as the Schiff-base intermediate with substrate in the catalytic mechanism.

Belongs to the transaldolase family. Type 1 subfamily. In terms of assembly, homodimer.

It is found in the cytoplasm. The enzyme catalyses D-sedoheptulose 7-phosphate + D-glyceraldehyde 3-phosphate = D-erythrose 4-phosphate + beta-D-fructose 6-phosphate. Its pathway is carbohydrate degradation; pentose phosphate pathway; D-glyceraldehyde 3-phosphate and beta-D-fructose 6-phosphate from D-ribose 5-phosphate and D-xylulose 5-phosphate (non-oxidative stage): step 2/3. Functionally, transaldolase is important for the balance of metabolites in the pentose-phosphate pathway. The sequence is that of Transaldolase from Pseudomonas entomophila (strain L48).